The sequence spans 672 residues: DNA ligase (672 aa).

NAD(+)-binding positions include aspartate 35–aspartate 39, serine 84–leucine 85, and glutamate 116. The active-site N6-AMP-lysine intermediate is lysine 118. Residues arginine 139, glutamate 179, lysine 295, and lysine 319 each coordinate NAD(+). Residues cysteine 413, cysteine 416, cysteine 431, and cysteine 436 each contribute to the Zn(2+) site. The 80-residue stretch at proline 593–isoleucine 672 folds into the BRCT domain.

It belongs to the NAD-dependent DNA ligase family. LigA subfamily. Mg(2+) is required as a cofactor. Mn(2+) serves as cofactor.

It carries out the reaction NAD(+) + (deoxyribonucleotide)n-3'-hydroxyl + 5'-phospho-(deoxyribonucleotide)m = (deoxyribonucleotide)n+m + AMP + beta-nicotinamide D-nucleotide.. In terms of biological role, DNA ligase that catalyzes the formation of phosphodiester linkages between 5'-phosphoryl and 3'-hydroxyl groups in double-stranded DNA using NAD as a coenzyme and as the energy source for the reaction. It is essential for DNA replication and repair of damaged DNA. The protein is DNA ligase of Syntrophus aciditrophicus (strain SB).